Consider the following 174-residue polypeptide: Co-chaperone protein HscB homolog (174 aa).

In terms of domain architecture, J spans Asn-2–Leu-74.

It belongs to the HscB family. Interacts with HscA and stimulates its ATPase activity.

Co-chaperone involved in the maturation of iron-sulfur cluster-containing proteins. Seems to help targeting proteins to be folded toward HscA. This Shewanella halifaxensis (strain HAW-EB4) protein is Co-chaperone protein HscB homolog.